An 85-amino-acid chain; its full sequence is Putative membrane protein insertion efficiency factor (85 aa).

The protein belongs to the UPF0161 family.

It localises to the cell membrane. In terms of biological role, could be involved in insertion of integral membrane proteins into the membrane. The chain is Putative membrane protein insertion efficiency factor from Buchnera aphidicola subsp. Baizongia pistaciae (strain Bp).